Here is a 660-residue protein sequence, read N- to C-terminus: Bifunctional polymyxin resistance protein ArnA (660 aa).

The segment at 1–304 (MKTVVFAYHD…TLGLVQGSRL (304 aa)) is formyltransferase ArnAFT. 86 to 88 (HLI) contributes to the (6R)-10-formyltetrahydrofolate binding site. His104 functions as the Proton donor; for formyltransferase activity in the catalytic mechanism. (6R)-10-formyltetrahydrofolate-binding positions include Arg114 and 136 to 140 (VKRAD). Positions 314-660 (RRTRVLILGV…RTVDLTDKPS (347 aa)) are dehydrogenase ArnADH. NAD(+) contacts are provided by residues Asp347 and 368 to 369 (DI). UDP-alpha-D-glucuronate-binding positions include Ala393, Tyr398, and 432–433 (TS). Glu434 functions as the Proton acceptor; for decarboxylase activity in the catalytic mechanism. Residues Arg460, Asn492, 526 to 535 (KLIDGGKQKR), and Tyr613 each bind UDP-alpha-D-glucuronate. The Proton donor; for decarboxylase activity role is filled by Arg619.

It in the N-terminal section; belongs to the Fmt family. UDP-L-Ara4N formyltransferase subfamily. In the C-terminal section; belongs to the NAD(P)-dependent epimerase/dehydratase family. UDP-glucuronic acid decarboxylase subfamily. In terms of assembly, homohexamer, formed by a dimer of trimers.

The catalysed reaction is UDP-alpha-D-glucuronate + NAD(+) = UDP-beta-L-threo-pentopyranos-4-ulose + CO2 + NADH. It catalyses the reaction UDP-4-amino-4-deoxy-beta-L-arabinose + (6R)-10-formyltetrahydrofolate = UDP-4-deoxy-4-formamido-beta-L-arabinose + (6S)-5,6,7,8-tetrahydrofolate + H(+). It participates in nucleotide-sugar biosynthesis; UDP-4-deoxy-4-formamido-beta-L-arabinose biosynthesis; UDP-4-deoxy-4-formamido-beta-L-arabinose from UDP-alpha-D-glucuronate: step 1/3. Its pathway is nucleotide-sugar biosynthesis; UDP-4-deoxy-4-formamido-beta-L-arabinose biosynthesis; UDP-4-deoxy-4-formamido-beta-L-arabinose from UDP-alpha-D-glucuronate: step 3/3. The protein operates within bacterial outer membrane biogenesis; lipopolysaccharide biosynthesis. Its function is as follows. Bifunctional enzyme that catalyzes the oxidative decarboxylation of UDP-glucuronic acid (UDP-GlcUA) to UDP-4-keto-arabinose (UDP-Ara4O) and the addition of a formyl group to UDP-4-amino-4-deoxy-L-arabinose (UDP-L-Ara4N) to form UDP-L-4-formamido-arabinose (UDP-L-Ara4FN). The modified arabinose is attached to lipid A and is required for resistance to polymyxin and cationic antimicrobial peptides. This chain is Bifunctional polymyxin resistance protein ArnA, found in Escherichia coli (strain SE11).